The following is a 23-amino-acid chain: Hongotoxin-4 (23 aa).

This sequence belongs to the short scorpion toxin superfamily. Potassium channel inhibitor family. Alpha-KTx 02 subfamily. In terms of tissue distribution, expressed by the venom gland.

Its subcellular location is the secreted. In terms of biological role, potent selective inhibitor of Kv1/KCNA voltage-gated potassium channels. In Centruroides limbatus (Bark scorpion), this protein is Hongotoxin-4.